The primary structure comprises 211 residues: Methylthioribulose-1-phosphate dehydratase (211 aa).

The Zn(2+) site is built by histidine 94 and histidine 96.

It belongs to the aldolase class II family. MtnB subfamily. It depends on Zn(2+) as a cofactor.

It catalyses the reaction 5-(methylsulfanyl)-D-ribulose 1-phosphate = 5-methylsulfanyl-2,3-dioxopentyl phosphate + H2O. Its pathway is amino-acid biosynthesis; L-methionine biosynthesis via salvage pathway; L-methionine from S-methyl-5-thio-alpha-D-ribose 1-phosphate: step 2/6. Functionally, catalyzes the dehydration of methylthioribulose-1-phosphate (MTRu-1-P) into 2,3-diketo-5-methylthiopentyl-1-phosphate (DK-MTP-1-P). This Pseudoalteromonas translucida (strain TAC 125) protein is Methylthioribulose-1-phosphate dehydratase.